The primary structure comprises 427 residues: Trigger factor (427 aa).

The PPIase FKBP-type domain maps to 163–248; it reads GNIAIIDFKG…VKGIKAKELP (86 aa).

This sequence belongs to the FKBP-type PPIase family. Tig subfamily.

The protein resides in the cytoplasm. It carries out the reaction [protein]-peptidylproline (omega=180) = [protein]-peptidylproline (omega=0). In terms of biological role, involved in protein export. Acts as a chaperone by maintaining the newly synthesized protein in an open conformation. Functions as a peptidyl-prolyl cis-trans isomerase. The sequence is that of Trigger factor from Clostridium botulinum (strain Eklund 17B / Type B).